A 254-amino-acid chain; its full sequence is MTRRRRIYEGKAKILFEGPEPGTLVQYFKDDATAFNAQKKGVITGKGVLNNRISEYLMMKLGEIGIPTHFVRRLNMREQLIREVEIIPIEVVVRNVAAGSLTKRFGIPEGTQLPRSIVEYYFKNDELGDPMVSEEHITAFGWAAPQDLDDMLALALRVNDYLSGLFLGIGLRLVDFKVEFGRLWENEEMRIILADEISPDNCRLWDVKTNEKLDKDRFRQDLGNVAEAYQEVAKRLGIMPEAGPGDMKAPKLVQ.

It belongs to the SAICAR synthetase family.

The enzyme catalyses 5-amino-1-(5-phospho-D-ribosyl)imidazole-4-carboxylate + L-aspartate + ATP = (2S)-2-[5-amino-1-(5-phospho-beta-D-ribosyl)imidazole-4-carboxamido]succinate + ADP + phosphate + 2 H(+). It functions in the pathway purine metabolism; IMP biosynthesis via de novo pathway; 5-amino-1-(5-phospho-D-ribosyl)imidazole-4-carboxamide from 5-amino-1-(5-phospho-D-ribosyl)imidazole-4-carboxylate: step 1/2. The chain is Phosphoribosylaminoimidazole-succinocarboxamide synthase from Rhodospirillum centenum (strain ATCC 51521 / SW).